Reading from the N-terminus, the 668-residue chain is DNA mismatch repair protein MutL (668 aa).

This sequence belongs to the DNA mismatch repair MutL/HexB family.

Its function is as follows. This protein is involved in the repair of mismatches in DNA. It is required for dam-dependent methyl-directed DNA mismatch repair. May act as a 'molecular matchmaker', a protein that promotes the formation of a stable complex between two or more DNA-binding proteins in an ATP-dependent manner without itself being part of a final effector complex. In Limosilactobacillus reuteri (strain DSM 20016) (Lactobacillus reuteri), this protein is DNA mismatch repair protein MutL.